The following is a 118-amino-acid chain: Probable small nuclear ribonucleoprotein Sm D2 (118 aa).

A Sm domain is found at 29 to 115 (LSILTNSVKN…VILVVKNPLA (87 aa)).

Belongs to the snRNP core protein family.

The protein localises to the nucleus. It localises to the cytoplasm. It is found in the cytosol. Its function is as follows. Plays a role in pre-mRNA splicing as a core component of the spliceosomal U1, U2, U4 and U5 small nuclear ribonucleoproteins (snRNPs), the building blocks of the spliceosome. The protein is Probable small nuclear ribonucleoprotein Sm D2 (snr-4) of Caenorhabditis elegans.